The following is an 89-amino-acid chain: Myrmicitoxin(1)-Pr2a (89 aa).

Residues 1-23 (MEIPKLLYIAVIAIGLSGSLTCA) form the signal peptide. A propeptide spanning residues 24-61 (TPLANPWADPEAEANPEAKAIAEATAEAIAEALAEPEP) is cleaved from the precursor. Asn-88 is subject to Asparagine amide.

This sequence belongs to the formicidae venom clade 1 family. In terms of tissue distribution, expressed by the venom gland.

It is found in the secreted. Vertebrate-selective toxin that causes pain by targeting voltage-gated sodium channels. The chain is Myrmicitoxin(1)-Pr2a from Pogonomyrmex rugosus (Desert harvester ant).